The primary structure comprises 895 residues: Alanine--tRNA ligase (895 aa).

Residues His-577, His-581, Cys-680, and His-684 each coordinate Zn(2+).

This sequence belongs to the class-II aminoacyl-tRNA synthetase family. The cofactor is Zn(2+).

The protein resides in the cytoplasm. The enzyme catalyses tRNA(Ala) + L-alanine + ATP = L-alanyl-tRNA(Ala) + AMP + diphosphate. Its function is as follows. Catalyzes the attachment of alanine to tRNA(Ala) in a two-step reaction: alanine is first activated by ATP to form Ala-AMP and then transferred to the acceptor end of tRNA(Ala). Also edits incorrectly charged Ser-tRNA(Ala) and Gly-tRNA(Ala) via its editing domain. This is Alanine--tRNA ligase from Kocuria rhizophila (strain ATCC 9341 / DSM 348 / NBRC 103217 / DC2201).